Consider the following 414-residue polypeptide: MVSTISRQDQNNNDDLNQPSKEGRFGKYGGQYVPETLMPALFELEEAASDAWKDKQFVNELNHLLKTYVGRETPLYEAKRLTEHYQTKTSTSRIWLKREDLNHTGAHKINNALGQALLAIRMGKQRIIAETGAGQHGVATATVCARFGLQCIIYMGAEDIKRQSLNVFRMKLLGAEVKVVTSGTATLKDATSEAIRDWVSNVETTHYILGSVAGPHPFPMIVRDFHAVIGEEAKKQCLESFGSLPDILLACVGGGSNAMGLFHPFVKEKSVRLIGVEAAGSGVNTEKHAATITKGSVGILHGSMSLLLQDKDGQVQEAHSISAGLDYPGVGPEHSYLKDIGRAEYGSVTDAEALDALKLVSELEGIIPALETAHAFAWLEKLCPTLDKDTEIVINCSGRGDKDVNTVASSLNID.

The tract at residues 1–28 (MVSTISRQDQNNNDDLNQPSKEGRFGKY) is disordered. Positions 8–18 (QDQNNNDDLNQ) are enriched in low complexity. An N6-(pyridoxal phosphate)lysine modification is found at K108.

It belongs to the TrpB family. In terms of assembly, tetramer of two alpha and two beta chains. It depends on pyridoxal 5'-phosphate as a cofactor.

It carries out the reaction (1S,2R)-1-C-(indol-3-yl)glycerol 3-phosphate + L-serine = D-glyceraldehyde 3-phosphate + L-tryptophan + H2O. It functions in the pathway amino-acid biosynthesis; L-tryptophan biosynthesis; L-tryptophan from chorismate: step 5/5. In terms of biological role, the beta subunit is responsible for the synthesis of L-tryptophan from indole and L-serine. This chain is Tryptophan synthase beta chain, found in Prochlorococcus marinus subsp. pastoris (strain CCMP1986 / NIES-2087 / MED4).